The following is a 154-amino-acid chain: Protein FAM162A (154 aa).

The required for proapoptotic activity stretch occupies residues 76 to 102; it reads RFKKEDEIPETVSLEMLDTAKNKMRVK. The chain crosses the membrane as a helical span at residues 103 to 120; it reads ISYLMIALTVVGCICMVI.

It belongs to the UPF0389 family. In terms of assembly, interacts with HSP90AB1; HSP90AB1 is essential for FAM162A mitochondrial localization and pro-apoptotic activity. Interacts with VDAC2; the interaction is probably involved in inducing mitochondrial permeability transition.

The protein resides in the mitochondrion membrane. Proposed to be involved in regulation of apoptosis; the exact mechanism may differ between cell types/tissues. May be involved in hypoxia-induced cell death of transformed cells implicating cytochrome C release and caspase activation (such as CASP9) and inducing mitochondrial permeability transition. May be involved in hypoxia-induced cell death of neuronal cells probably by promoting release of AIFM1 from mitochondria to cytoplasm and its translocation to the nucleus; however, the involvement of caspases has been reported conflictingly. The polypeptide is Protein FAM162A (FAM162A) (Pongo abelii (Sumatran orangutan)).